The sequence spans 436 residues: UDP-N-acetylmuramate--L-alanine ligase (436 aa).

Position 108–114 (108–114) interacts with ATP; it reads GAHGKTS.

It belongs to the MurCDEF family.

Its subcellular location is the cytoplasm. It carries out the reaction UDP-N-acetyl-alpha-D-muramate + L-alanine + ATP = UDP-N-acetyl-alpha-D-muramoyl-L-alanine + ADP + phosphate + H(+). Its pathway is cell wall biogenesis; peptidoglycan biosynthesis. Cell wall formation. The protein is UDP-N-acetylmuramate--L-alanine ligase of Bacillus cereus (strain B4264).